A 315-amino-acid polypeptide reads, in one-letter code: Outer membrane protease OmpP (315 aa).

A signal peptide spans 1–23 (MQTKLLAIMLAAPVVFSSQEASA). Residues D103, D105, D230, and H232 contribute to the active site.

This sequence belongs to the peptidase A26 family.

The protein resides in the cell outer membrane. Protease; also acts as a receptor for bacteriophage Ox2. This Escherichia coli (strain K12) protein is Outer membrane protease OmpP (ompP).